Reading from the N-terminus, the 228-residue chain is Ribosomal RNA large subunit methyltransferase E (228 aa).

Residues Gly76, Trp78, Asp99, Asp115, and Asp139 each coordinate S-adenosyl-L-methionine. The active-site Proton acceptor is the Lys179.

The protein belongs to the class I-like SAM-binding methyltransferase superfamily. RNA methyltransferase RlmE family.

The protein resides in the cytoplasm. It catalyses the reaction uridine(2552) in 23S rRNA + S-adenosyl-L-methionine = 2'-O-methyluridine(2552) in 23S rRNA + S-adenosyl-L-homocysteine + H(+). Specifically methylates the uridine in position 2552 of 23S rRNA at the 2'-O position of the ribose in the fully assembled 50S ribosomal subunit. The sequence is that of Ribosomal RNA large subunit methyltransferase E from Nitrobacter hamburgensis (strain DSM 10229 / NCIMB 13809 / X14).